The chain runs to 348 residues: Lipoyl synthase, mitochondrial (348 aa).

[4Fe-4S] cluster is bound by residues Cys105, Cys110, Cys116, Cys136, Cys140, and Cys143. One can recognise a Radical SAM core domain in the interval 121–341 (ETGTATATIM…RTXXLVSYVL (221 aa)).

This sequence belongs to the radical SAM superfamily. Lipoyl synthase family. The cofactor is [4Fe-4S] cluster.

It localises to the mitochondrion. The catalysed reaction is [[Fe-S] cluster scaffold protein carrying a second [4Fe-4S](2+) cluster] + N(6)-octanoyl-L-lysyl-[protein] + 2 oxidized [2Fe-2S]-[ferredoxin] + 2 S-adenosyl-L-methionine + 4 H(+) = [[Fe-S] cluster scaffold protein] + N(6)-[(R)-dihydrolipoyl]-L-lysyl-[protein] + 4 Fe(3+) + 2 hydrogen sulfide + 2 5'-deoxyadenosine + 2 L-methionine + 2 reduced [2Fe-2S]-[ferredoxin]. It functions in the pathway protein modification; protein lipoylation via endogenous pathway; protein N(6)-(lipoyl)lysine from octanoyl-[acyl-carrier-protein]: step 2/2. Functionally, catalyzes the radical-mediated insertion of two sulfur atoms into the C-6 and C-8 positions of the octanoyl moiety bound to the lipoyl domains of lipoate-dependent enzymes, thereby converting the octanoylated domains into lipoylated derivatives. This is Lipoyl synthase, mitochondrial (LIP1) from Ricinus communis (Castor bean).